The following is a 428-amino-acid chain: tRNA(Ile)-lysidine synthase (428 aa).

25–30 (SGGIDS) serves as a coordination point for ATP.

This sequence belongs to the tRNA(Ile)-lysidine synthase family.

The protein resides in the cytoplasm. The enzyme catalyses cytidine(34) in tRNA(Ile2) + L-lysine + ATP = lysidine(34) in tRNA(Ile2) + AMP + diphosphate + H(+). Ligates lysine onto the cytidine present at position 34 of the AUA codon-specific tRNA(Ile) that contains the anticodon CAU, in an ATP-dependent manner. Cytidine is converted to lysidine, thus changing the amino acid specificity of the tRNA from methionine to isoleucine. The polypeptide is tRNA(Ile)-lysidine synthase (Haemophilus ducreyi (strain 35000HP / ATCC 700724)).